Here is a 223-residue protein sequence, read N- to C-terminus: MNIAKLIDHTILKANTTKEDVMKVIEEAKEYKFASVCINPTWVKLAAEELAGHDVDVCTVIGFPLGASTTETKAFETKDAIAKGATEVDMVINVGALKDGDDELVEKDIYEVVQAAKGKALVKVIIETCLLTDEEKVRACELSVKAGADFVKTSTGFSTGGATAEDIALMRKTVGPNVGVKASGGVRTREDAEKMVAAGASRVGASASVAIVLNDAKGATDNY.

The active-site Proton donor/acceptor is the Asp89. Lys152 functions as the Schiff-base intermediate with acetaldehyde in the catalytic mechanism. The active-site Proton donor/acceptor is the Lys181.

The protein belongs to the DeoC/FbaB aldolase family. DeoC type 1 subfamily.

The protein resides in the cytoplasm. The catalysed reaction is 2-deoxy-D-ribose 5-phosphate = D-glyceraldehyde 3-phosphate + acetaldehyde. It participates in carbohydrate degradation; 2-deoxy-D-ribose 1-phosphate degradation; D-glyceraldehyde 3-phosphate and acetaldehyde from 2-deoxy-alpha-D-ribose 1-phosphate: step 2/2. In terms of biological role, catalyzes a reversible aldol reaction between acetaldehyde and D-glyceraldehyde 3-phosphate to generate 2-deoxy-D-ribose 5-phosphate. The sequence is that of Deoxyribose-phosphate aldolase from Bacillus cereus (strain ATCC 10987 / NRS 248).